The chain runs to 167 residues: Large ribosomal subunit protein uL23 (167 aa).

The tract at residues 1–130 is large ribosomal subunit protein uL23; the sequence is MNVNEIIKGP…ELEAKNKEIA (130 aa). Disordered stretches follow at residues 91–112 and 137–167; these read FEDE…TDEK and QAEL…NSAK. 2 stretches are compositionally biased toward basic and acidic residues: residues 97 to 112 and 137 to 157; these read QDQK…TDEK and QAEL…KIEN. A unknown region spans residues 131-167; the sequence is EKLAKKQAELAKKESETNENQEKKIENQTENQENSAK. Positions 158-167 are enriched in polar residues; the sequence is QTENQENSAK.

This sequence belongs to the universal ribosomal protein uL23 family. In terms of assembly, part of the 50S ribosomal subunit. Contacts protein L29, and trigger factor when it is bound to the ribosome.

Functionally, one of the early assembly proteins it binds 23S rRNA. One of the proteins that surrounds the polypeptide exit tunnel on the outside of the ribosome. Forms the main docking site for trigger factor binding to the ribosome. This Mesomycoplasma hyopneumoniae (strain 7448) (Mycoplasma hyopneumoniae) protein is Large ribosomal subunit protein uL23.